Reading from the N-terminus, the 360-residue chain is Photosystem II protein D1 3 (360 aa).

Transmembrane regions (helical) follow at residues 29-46 (YVGWFGVLMIPTLLTATI), 118-133 (HFLLGISCYMGRQWEL), and 142-156 (WICVAYSAPLSAAFA). H118 lines the chlorophyll a pocket. Y126 contributes to the pheophytin a binding site. Residues D170 and E189 each coordinate [CaMn4O5] cluster. A helical membrane pass occupies residues 197-218 (FHMLGVAGVFGGSLFSAMHGSL). H198 serves as a coordination point for chlorophyll a. A quinone is bound by residues H215 and 264–265 (SF). Fe cation is bound at residue H215. H272 lines the Fe cation pocket. A helical transmembrane segment spans residues 274–288 (FLGAWPVVGIWFTSM). The [CaMn4O5] cluster site is built by H332, E333, D342, and A344. Residues 345 to 360 (AGEATPVALTAPSIHG) constitute a propeptide that is removed on maturation.

The protein belongs to the reaction center PufL/M/PsbA/D family. As to quaternary structure, PSII is composed of 1 copy each of membrane proteins PsbA, PsbB, PsbC, PsbD, PsbE, PsbF, PsbH, PsbI, PsbJ, PsbK, PsbL, PsbM, PsbT, PsbX, PsbY, PsbZ, Psb30/Ycf12, peripheral proteins PsbO, CyanoQ (PsbQ), PsbU, PsbV and a large number of cofactors. It forms dimeric complexes. The D1/D2 heterodimer binds P680, chlorophylls that are the primary electron donor of PSII, and subsequent electron acceptors. It shares a non-heme iron and each subunit binds pheophytin, quinone, additional chlorophylls, carotenoids and lipids. D1 provides most of the ligands for the Mn4-Ca-O5 cluster of the oxygen-evolving complex (OEC). There is also a Cl(-1) ion associated with D1 and D2, which is required for oxygen evolution. The PSII complex binds additional chlorophylls, carotenoids and specific lipids. is required as a cofactor. Tyr-161 forms a radical intermediate that is referred to as redox-active TyrZ, YZ or Y-Z. Post-translationally, C-terminally processed by CtpA; processing is essential to allow assembly of the oxygen-evolving complex and thus photosynthetic growth.

The protein localises to the cellular thylakoid membrane. The catalysed reaction is 2 a plastoquinone + 4 hnu + 2 H2O = 2 a plastoquinol + O2. In terms of biological role, photosystem II (PSII) is a light-driven water:plastoquinone oxidoreductase that uses light energy to abstract electrons from H(2)O, generating O(2) and a proton gradient subsequently used for ATP formation. It consists of a core antenna complex that captures photons, and an electron transfer chain that converts photonic excitation into a charge separation. The D1/D2 (PsbA/PsbD) reaction center heterodimer binds P680, the primary electron donor of PSII as well as several subsequent electron acceptors. The sequence is that of Photosystem II protein D1 3 from Synechococcus sp. (strain ATCC 27144 / PCC 6301 / SAUG 1402/1) (Anacystis nidulans).